The chain runs to 292 residues: Glycine--tRNA ligase alpha subunit (292 aa).

Belongs to the class-II aminoacyl-tRNA synthetase family. As to quaternary structure, tetramer of two alpha and two beta subunits.

It is found in the cytoplasm. It carries out the reaction tRNA(Gly) + glycine + ATP = glycyl-tRNA(Gly) + AMP + diphosphate. This chain is Glycine--tRNA ligase alpha subunit, found in Geobacter sulfurreducens (strain ATCC 51573 / DSM 12127 / PCA).